Consider the following 543-residue polypeptide: CTP synthase (543 aa).

An amidoligase domain region spans residues 1-267; sequence MKQTKYIFVT…LSPIAEILDL (267 aa). Serine 15 contacts CTP. A UTP-binding site is contributed by serine 15. Residues 16–21 and aspartate 73 each bind ATP; that span reads SLGKGI. Positions 73 and 141 each coordinate Mg(2+). CTP-binding positions include 148 to 150, 188 to 193, and lysine 224; these read DIE and KTKPTQ. UTP-binding positions include 188 to 193 and lysine 224; that span reads KTKPTQ. The Glutamine amidotransferase type-1 domain occupies 292–543; sequence KIAFVGKYVD…IKAAINYEDN (252 aa). Glycine 354 contributes to the L-glutamine binding site. Residue cysteine 381 is the Nucleophile; for glutamine hydrolysis of the active site. Residues 382–385, glutamate 405, and arginine 473 each bind L-glutamine; that span reads LGMQ. Active-site residues include histidine 516 and glutamate 518.

Belongs to the CTP synthase family. In terms of assembly, homotetramer.

The catalysed reaction is UTP + L-glutamine + ATP + H2O = CTP + L-glutamate + ADP + phosphate + 2 H(+). It catalyses the reaction L-glutamine + H2O = L-glutamate + NH4(+). It carries out the reaction UTP + NH4(+) + ATP = CTP + ADP + phosphate + 2 H(+). It functions in the pathway pyrimidine metabolism; CTP biosynthesis via de novo pathway; CTP from UDP: step 2/2. Its activity is regulated as follows. Allosterically activated by GTP, when glutamine is the substrate; GTP has no effect on the reaction when ammonia is the substrate. The allosteric effector GTP functions by stabilizing the protein conformation that binds the tetrahedral intermediate(s) formed during glutamine hydrolysis. Inhibited by the product CTP, via allosteric rather than competitive inhibition. Functionally, catalyzes the ATP-dependent amination of UTP to CTP with either L-glutamine or ammonia as the source of nitrogen. Regulates intracellular CTP levels through interactions with the four ribonucleotide triphosphates. The sequence is that of CTP synthase from Campylobacter jejuni subsp. jejuni serotype O:6 (strain 81116 / NCTC 11828).